Reading from the N-terminus, the 418-residue chain is Glutamyl-tRNA reductase (418 aa).

Residues Thr51–Arg54, Ser107, Glu112–Gln114, and Gln118 contribute to the substrate site. The Nucleophile role is filled by Cys52. Gly187 to Ala192 is an NADP(+) binding site.

It belongs to the glutamyl-tRNA reductase family. As to quaternary structure, homodimer.

It catalyses the reaction (S)-4-amino-5-oxopentanoate + tRNA(Glu) + NADP(+) = L-glutamyl-tRNA(Glu) + NADPH + H(+). It participates in porphyrin-containing compound metabolism; protoporphyrin-IX biosynthesis; 5-aminolevulinate from L-glutamyl-tRNA(Glu): step 1/2. In terms of biological role, catalyzes the NADPH-dependent reduction of glutamyl-tRNA(Glu) to glutamate 1-semialdehyde (GSA). The polypeptide is Glutamyl-tRNA reductase (Dichelobacter nodosus (strain VCS1703A)).